A 479-amino-acid polypeptide reads, in one-letter code: Sulfate adenylyltransferase subunit 1 (479 aa).

The region spanning 25–239 is the tr-type G domain; it reads KSLLRFLTCG…EVLETVDIQR (215 aa). Residues 34–41 are G1; sequence GSVDDGKS. 34–41 contacts GTP; that stretch reads GSVDDGKS. The segment at 92 to 96 is G2; it reads GITID. A G3 region spans residues 113 to 116; it reads DTPG. Residues 113-117 and 168-171 contribute to the GTP site; these read DTPGH and NKMD. The segment at 168-171 is G4; that stretch reads NKMD. Residues 206-208 form a G5 region; it reads SAL.

The protein belongs to the TRAFAC class translation factor GTPase superfamily. Classic translation factor GTPase family. CysN/NodQ subfamily. Heterodimer composed of CysD, the smaller subunit, and CysN.

It catalyses the reaction sulfate + ATP + H(+) = adenosine 5'-phosphosulfate + diphosphate. Its pathway is sulfur metabolism; hydrogen sulfide biosynthesis; sulfite from sulfate: step 1/3. Functionally, with CysD forms the ATP sulfurylase (ATPS) that catalyzes the adenylation of sulfate producing adenosine 5'-phosphosulfate (APS) and diphosphate, the first enzymatic step in sulfur assimilation pathway. APS synthesis involves the formation of a high-energy phosphoric-sulfuric acid anhydride bond driven by GTP hydrolysis by CysN coupled to ATP hydrolysis by CysD. This is Sulfate adenylyltransferase subunit 1 from Salmonella gallinarum (strain 287/91 / NCTC 13346).